The primary structure comprises 411 residues: Snake venom metalloproteinase ACLF (411 aa).

The N-terminal stretch at 1–20 is a signal peptide; the sequence is MIQVLLVTLCLAAFPYQGSS. Residues 21-189 constitute a propeptide that is removed on maturation; the sequence is IILESGNVND…KKAFQLNLTP (169 aa). A Peptidase M12B domain is found at 197 to 393; the sequence is RYVELVIVAD…NNPQCILNKP (197 aa). Residues glutamate 200 and aspartate 284 each contribute to the Ca(2+) site. 3 disulfides stabilise this stretch: cysteine 308–cysteine 388, cysteine 348–cysteine 372, and cysteine 350–cysteine 355. Histidine 333 contacts Zn(2+). Glutamate 334 is a catalytic residue. Zn(2+) contacts are provided by histidine 337 and histidine 343. 6 residues coordinate Ca(2+): cysteine 388, asparagine 391, valine 403, asparagine 406, leucine 408, and glutamate 410.

Belongs to the venom metalloproteinase (M12B) family. P-I subfamily. In terms of assembly, monomer. It depends on Zn(2+) as a cofactor. Expressed by the venom gland.

It is found in the secreted. With respect to regulation, inhibited by EDTA and 1,10-phenanthroline, but not by PMSF. Functionally, snake venom zinc metalloprotease that has fibrinolytic activity. The recombinant enzyme cleaves both alpha- and beta-chains of fibrinogen, but not the gamma-chain. The recombinant protein does not produce hemorrhage in mice. Cleaves the peptide substrate Abz-LVEALYQ-EDDnp at the Ala-Leu bond in vitro. This is Snake venom metalloproteinase ACLF (ACLPREF) from Agkistrodon contortrix laticinctus (Broad-banded copperhead).